The primary structure comprises 362 residues: Red-sensitive opsin (362 aa).

Residues 1-49 (MAAWEAAFAARRRHEEEDTTRDSVFTYTNSNNTRGPFEGPNYHIAPRWV) are Extracellular-facing. N-linked (GlcNAc...) asparagine glycosylation occurs at Asn31. The chain crosses the membrane as a helical span at residues 50–74 (YNLTSVWMIFVVAASVFTNGLVLVA). At 75-86 (TWKFKKLRHPLN) the chain is on the cytoplasmic side. Residues 87–112 (WILVNLAVADLGETVIASTISVINQI) traverse the membrane as a helical segment. Residues 113-126 (SGYFILGHPMCVVE) are Extracellular-facing. Cys123 and Cys200 form a disulfide bridge. Residues 127 to 146 (GYTVSACGITALWSLAIISW) form a helical membrane-spanning segment. Topologically, residues 147–165 (ERWFVVCKPFGNIKFDGKL) are cytoplasmic. The helical transmembrane segment at 166-189 (AVAGILFSWLWSCAWTAPPIFGWS) threads the bilayer. The Extracellular portion of the chain corresponds to 190-215 (RYWPHGLKTSCGPDVFSGSSDPGVQS). The helical transmembrane segment at 216–243 (YMVVLMVTCCFFPLAIIILCYLQVWLAI) threads the bilayer. Topologically, residues 244–265 (RAVAAQQKESESTQKAEKEVSR) are cytoplasmic. A helical membrane pass occupies residues 266–289 (MVVVMIVAYCFCWGPYTFFACFAA). Topologically, residues 290-297 (ANPGYAFH) are extracellular. The chain crosses the membrane as a helical span at residues 298-322 (PLAAALPAYFAKSATIYNPIIYVFM). N6-(retinylidene)lysine is present on Lys309. Residues 323–362 (NRQFRNCILQLFGKKVDDGSEVSTSRTEVSSVSNSSVSPA) are Cytoplasmic-facing.

Belongs to the G-protein coupled receptor 1 family. Opsin subfamily. In terms of processing, phosphorylated on some or all of the serine and threonine residues present in the C-terminal region. In terms of tissue distribution, the color pigments are found in the cone photoreceptor cells.

It is found in the membrane. Visual pigments are the light-absorbing molecules that mediate vision. They consist of an apoprotein, opsin, covalently linked to cis-retinal. This is Red-sensitive opsin from Gallus gallus (Chicken).